Reading from the N-terminus, the 90-residue chain is Acylphosphatase (90 aa).

The Acylphosphatase-like domain occupies 3–90; that stretch reads NYKIIVFGTV…KTYNDFSVTY (88 aa). Residues Arg-18 and Asn-36 contribute to the active site.

This sequence belongs to the acylphosphatase family.

The enzyme catalyses an acyl phosphate + H2O = a carboxylate + phosphate + H(+). The protein is Acylphosphatase (acyP) of Ligilactobacillus salivarius (strain UCC118) (Lactobacillus salivarius).